A 91-amino-acid polypeptide reads, in one-letter code: uncharacterized protein (91 aa).

A run of 3 helical transmembrane segments spans residues 9–29 (LIHA…YTAG), 30–50 (LGIF…VIFG), and 67–87 (WLGC…VLKF).

Its subcellular location is the cell membrane. This is an uncharacterized protein from Methanocaldococcus jannaschii (strain ATCC 43067 / DSM 2661 / JAL-1 / JCM 10045 / NBRC 100440) (Methanococcus jannaschii).